The primary structure comprises 258 residues: Thiazole synthase (258 aa).

Residue lysine 100 is the Schiff-base intermediate with DXP of the active site. 1-deoxy-D-xylulose 5-phosphate contacts are provided by residues glycine 161, 187 to 188 (AG), and 209 to 210 (NT).

This sequence belongs to the ThiG family. In terms of assembly, homotetramer. Forms heterodimers with either ThiH or ThiS.

Its subcellular location is the cytoplasm. The catalysed reaction is [ThiS sulfur-carrier protein]-C-terminal-Gly-aminoethanethioate + 2-iminoacetate + 1-deoxy-D-xylulose 5-phosphate = [ThiS sulfur-carrier protein]-C-terminal Gly-Gly + 2-[(2R,5Z)-2-carboxy-4-methylthiazol-5(2H)-ylidene]ethyl phosphate + 2 H2O + H(+). It participates in cofactor biosynthesis; thiamine diphosphate biosynthesis. In terms of biological role, catalyzes the rearrangement of 1-deoxy-D-xylulose 5-phosphate (DXP) to produce the thiazole phosphate moiety of thiamine. Sulfur is provided by the thiocarboxylate moiety of the carrier protein ThiS. In vitro, sulfur can be provided by H(2)S. This chain is Thiazole synthase, found in Campylobacter jejuni subsp. jejuni serotype O:2 (strain ATCC 700819 / NCTC 11168).